The chain runs to 837 residues: Striatin-interacting protein 1 (837 aa).

N-acetylmethionine is present on Met-1. Disordered stretches follow at residues 1–67 (MEPA…ESPD) and 333–423 (AASP…KGLP). The span at 18-35 (PQPPPPPPPAAAQPPPGA) shows a compositional bias: pro residues. Residues 36–46 (PRAAAGLLPGG) show a composition bias toward low complexity. Over residues 47-60 (KAREFNRNQRKDSE) the composition is skewed to basic and acidic residues. Residues Ser-59, Ser-335, and Ser-339 each carry the phosphoserine modification. Basic and acidic residues predominate over residues 356 to 377 (KALIKQDNLDAFNERDPYKADD). Residues 378-391 (SREEEEENDDDNSL) are compositionally biased toward acidic residues. Ser-788 carries the post-translational modification Phosphoserine. The interval 796 to 837 (DNCLQSVLGQRVDLPEDFQMNYDLWLEREVFSKPISWEELLQ) is required for STRIPAK core complex formation.

This sequence belongs to the STRIP family. In terms of assembly, part of the core of STRIPAK complexes composed of PP2A catalytic and scaffolding subunits, the striatins (PP2A regulatory subunits), the striatin-associated proteins MOB4, STRIP1 and STRIP2, PDCD10 and members of the STE20 kinases, such as STK24 and STK26. The STRIPAK complex can be extended by adapter proteins such as SLMAP:SIKE1, CTTNBP2 or CTTNBP2NL. Interacts with CDC42BPB. Interacts with CTTNBP2NL.

Its subcellular location is the cytoplasm. Plays a role in the regulation of cell morphology and cytoskeletal organization. Required in the cortical actin filament dynamics and cell shape. Part of the striatin-interacting phosphatase and kinase (STRIPAK) complexes. STRIPAK complexes have critical roles in protein (de)phosphorylation and are regulators of multiple signaling pathways including Hippo, MAPK, nuclear receptor and cytoskeleton remodeling. Different types of STRIPAK complexes are involved in a variety of biological processes such as cell growth, differentiation, apoptosis, metabolism and immune regulation. This is Striatin-interacting protein 1 from Homo sapiens (Human).